Consider the following 1327-residue polypeptide: Polarized growth protein L1 (1327 aa).

An N-terminal signal peptide occupies residues 1–30 (MRESFASLLATGAGKLALSLLFAATPFTSA). Topologically, residues 31 to 1169 (YTFNQVPSPN…FSQQNGKHLA (1139 aa)) are extracellular. Residues asparagine 74, asparagine 90, asparagine 105, asparagine 115, asparagine 132, asparagine 170, asparagine 217, asparagine 224, asparagine 235, asparagine 318, asparagine 342, asparagine 452, asparagine 475, asparagine 601, asparagine 639, asparagine 648, and asparagine 691 are each glycosylated (N-linked (GlcNAc...) asparagine). The stretch at 595–641 (NLYVAGNFSNNDGRNNIFSFKQGASDPTALPNRGLNRQVMTLYQNDS) is one Kelch 1 repeat. One copy of the Kelch 2 repeat lies at 699 to 754 (QVLAVSGFFDSVNEFNGNPSTNVQDFAVWVPSRSNWLHNLDFFTLAMSGRLMTFAD). Residues asparagine 835, asparagine 852, asparagine 877, and asparagine 931 are each glycosylated (N-linked (GlcNAc...) asparagine). Kelch repeat units lie at residues 945 to 993 (DVFV…ISDT) and 994 to 1040 (QMYI…TIAN). N-linked (GlcNAc...) asparagine glycans are attached at residues asparagine 1000, asparagine 1006, and asparagine 1126. The chain crosses the membrane as a helical span at residues 1170–1190 (LWAIVLIGLAIALVLTFLLVV). At 1191-1327 (AGILLEWYRN…VFDTILACSS (137 aa)) the chain is on the cytoplasmic side.

It belongs to the RAX2 family.

The protein localises to the cell membrane. Functionally, has been identified within the cluster that mediates the biosynthesis of squalestatin, but as its expression does not follow that of the other cluster members and it is not conserved in close related clusters, L1 seems not to be involved in the biosynthesis of squalestatin. Probably plays a role as a cell polarity regulator. The chain is Polarized growth protein L1 from Phoma sp. (strain ATCC 20986 / MF5453).